Here is a 331-residue protein sequence, read N- to C-terminus: MSNNAAYAVTPVKTTSTSSRTTFHFAAGLCSGLTSSILLQPADLLKTRVQQSQKTASLLPTIKTILSSPHPIRGLWRGTLPSALRTGFGSALYFTSLNALRQGLAQTEASMAIAASSSDGKSRTSSSALPKLSNWGNLATGAVARTAAGFVMMPVTVLKVRYESDYYAYRSLYSAGRDIVRTEGVRGLFSGFGATAARDAPYAGLYVLFYEQLKRRLASVASSEQSEQPLKSTSSSSINFVSGGLAAGLATAITNPFDAVKTRLQLMPGKYGNMIRAVRLMIREDGVRSLFGGLGLRITRKALSSALAWTVYEELILRAEAHWAEKDKIDL.

Solcar repeat units lie at residues 19-103 (SRTT…LRQG), 132-216 (LSNW…LKRR), and 234-318 (SSSS…LILR). The next 6 helical transmembrane spans lie at 25 to 50 (FAAGLCSGLTSSILLQPADLLKTRVQ), 78 to 104 (GTLPSALRTGFGSALYFTSLNALRQGL), 138 to 163 (LATGAVARTAAGFVMMPVTVLKVRYE), 191 to 214 (GFGATAARDAPYAGLYVLFYEQLK), 238 to 264 (INFVSGGLAAGLATAITNPFDAVKTRL), and 293 to 311 (GLGLRITRKALSSALAWTV).

This sequence belongs to the mitochondrial carrier (TC 2.A.29) family. SLC25A38 subfamily.

It localises to the mitochondrion inner membrane. The enzyme catalyses glycine(in) = glycine(out). Functionally, mitochondrial glycine transporter that imports glycine into the mitochondrial matrix. Plays an important role in providing glycine for the first enzymatic step in heme biosynthesis, the condensation of glycine with succinyl-CoA to produce 5-aminolevulinate (ALA) in the mitochondrial matrix. In Neosartorya fischeri (strain ATCC 1020 / DSM 3700 / CBS 544.65 / FGSC A1164 / JCM 1740 / NRRL 181 / WB 181) (Aspergillus fischerianus), this protein is Mitochondrial glycine transporter.